Consider the following 2309-residue polypeptide: Collagen alpha-4(VI) chain (2309 aa).

A signal peptide spans 1 to 22 (MGTWKTFWLIISLAAGLGFVKS). Positions 21–1410 (KSQRIVCREA…TCCNMYAKCY (1390 aa)) are nonhelical region. 6 VWFA domains span residues 34-206 (DIVF…AQKL), 235-413 (DIVF…LQAL), 430-653 (DVVF…FQRV), 634-811 (DLVF…GNKL), 849-1018 (DIYF…IRDI), and 1030-1199 (DIIF…EKEI). A glycan (N-linked (GlcNAc...) asparagine) is linked at Asn-188. Residue Asn-754 is glycosylated (N-linked (GlcNAc...) asparagine). Residue Asn-1114 is glycosylated (N-linked (GlcNAc...) asparagine). The tract at residues 1411 to 1744 (GDDGIRGEPG…GKMGTKGSKG (334 aa)) is triple-helical region. Basic and acidic residues predominate over residues 1414 to 1430 (GIRGEPGSRGEQGERGL). The tract at residues 1414-1746 (GIRGEPGSRG…MGTKGSKGLA (333 aa)) is disordered. A compositionally biased stretch (gly residues) spans 1480–1489 (GEEGVGGLDG). The Cell attachment site signature appears at 1527–1529 (RGD). 2 stretches are compositionally biased toward low complexity: residues 1605-1621 (PRGRQGPPGFFGQKGDP) and 1650-1669 (PAGERGPRGQQGPRGQPGLF). The nonhelical region stretch occupies residues 1745 to 2309 (LADRTPCEIV…EGECLNYVLK (565 aa)). 2 consecutive VWFA domains span residues 1776 to 1957 (EVVF…ASCT) and 1982 to 2187 (DLVF…LNLL). The short motif at 2208-2210 (RGD) is the Cell attachment site element. A disordered region spans residues 2262–2300 (ALGSHGKDRADTEDIDQETPAKGRHLGPTHGPCPMGPEE).

Belongs to the type VI collagen family. Trimers composed of three different chains: alpha-1(VI), alpha-2(VI), and alpha-3(VI) or alpha-4(VI) or alpha-5(VI) or alpha-6(VI). In terms of processing, prolines at the third position of the tripeptide repeating unit (G-X-Y) are hydroxylated in some or all of the chains. As to expression, in newborn, it is expressed in lung, kidney, brain, intestine, skin, sternum and, at weak level, calvaria. In adult, it is almost absent with some weak expression in ovary and very weak expression in spleen, lung, uterus and brain.

Its subcellular location is the secreted. The protein localises to the extracellular space. It localises to the extracellular matrix. In terms of biological role, collagen VI acts as a cell-binding protein. This is Collagen alpha-4(VI) chain (Col6a4) from Mus musculus (Mouse).